A 100-amino-acid chain; its full sequence is Small ribosomal subunit protein uS14c (100 aa).

Belongs to the universal ribosomal protein uS14 family. In terms of assembly, part of the 30S ribosomal subunit.

The protein resides in the plastid. In terms of biological role, binds 16S rRNA, required for the assembly of 30S particles. The sequence is that of Small ribosomal subunit protein uS14c from Cuscuta obtusiflora (Peruvian dodder).